Reading from the N-terminus, the 581-residue chain is Trehalase (581 aa).

Belongs to the glycosyl hydrolase 15 family. In terms of assembly, monomer.

The catalysed reaction is alpha,alpha-trehalose + H2O = alpha-D-glucose + beta-D-glucose. It functions in the pathway glycan degradation; trehalose degradation; D-glucose from alpha,alpha-trehalose: step 1/1. Its activity is regulated as follows. Inhibited by validamycin A. Catalyzes the hydrolysis of alpha,alpha-trehalose into two molecules of D-glucose. The sequence is that of Trehalase from Thermoplasma acidophilum (strain ATCC 25905 / DSM 1728 / JCM 9062 / NBRC 15155 / AMRC-C165).